The sequence spans 395 residues: S-adenosylmethionine synthase (395 aa).

Position 16 (H16) interacts with ATP. D18 contributes to the Mg(2+) binding site. A K(+)-binding site is contributed by E44. L-methionine-binding residues include E57 and Q100. Residues 100–110 (QSPDIAQGVDR) form a flexible loop region. ATP is bound by residues 167 to 169 (DAK), 233 to 234 (RF), D242, 248 to 249 (RK), A265, and K269. D242 lines the L-methionine pocket. K273 contributes to the L-methionine binding site.

The protein belongs to the AdoMet synthase family. In terms of assembly, homotetramer; dimer of dimers. It depends on Mg(2+) as a cofactor. The cofactor is K(+).

The protein localises to the cytoplasm. It carries out the reaction L-methionine + ATP + H2O = S-adenosyl-L-methionine + phosphate + diphosphate. The protein operates within amino-acid biosynthesis; S-adenosyl-L-methionine biosynthesis; S-adenosyl-L-methionine from L-methionine: step 1/1. In terms of biological role, catalyzes the formation of S-adenosylmethionine (AdoMet) from methionine and ATP. The overall synthetic reaction is composed of two sequential steps, AdoMet formation and the subsequent tripolyphosphate hydrolysis which occurs prior to release of AdoMet from the enzyme. The polypeptide is S-adenosylmethionine synthase (Burkholderia cenocepacia (strain ATCC BAA-245 / DSM 16553 / LMG 16656 / NCTC 13227 / J2315 / CF5610) (Burkholderia cepacia (strain J2315))).